The following is a 1456-amino-acid chain: ABC-type transporter eriD (1456 aa).

Residues Met-1–Lys-65 form a disordered region. Over residues Ser-30–Tyr-40 the composition is skewed to polar residues. Residues Leu-118–Pro-372 form the ABC transporter 1 domain. The next 6 membrane-spanning stretches (helical) occupy residues Asn-481–Tyr-501, Ala-515–Ile-535, Val-561–Phe-581, Gly-590–Phe-610, Ala-623–Pro-643, and Ile-734–Ala-754. A disordered region spans residues Glu-775–Lys-799. One can recognise an ABC transporter 2 domain in the interval Phe-813–Ala-1056. Residue Gly-849–Thr-856 coordinates ATP. 7 consecutive transmembrane segments (helical) span residues Tyr-1148–Phe-1168, Val-1184–Thr-1204, Leu-1233–Met-1253, Leu-1269–Ile-1289, Ile-1301–Gly-1321, Pro-1337–Cys-1357, and Phe-1423–Leu-1443.

It belongs to the ABC transporter superfamily. ABCG family. PDR (TC 3.A.1.205) subfamily.

The protein localises to the membrane. ABC-type transporter; part of the gene cluster that mediates the biosynthesis of erinacines, cyathane-xylosides that show unique biological activities, including leishmanicidal activity, stimulating activity for nerve growth-factor synthesis, and agonistic activity toward the kappa opioid receptor. The chain is ABC-type transporter eriD from Hericium erinaceus (Lion's mane mushroom).